The following is an 887-amino-acid chain: Bifunctional uridylyltransferase/uridylyl-removing enzyme (887 aa).

Residues 1-329 are uridylyltransferase; it reads MKGLNAKPFS…FPDEEAVTTI (329 aa). The interval 330–686 is uridylyl-removing; that stretch reads INERFQKRGD…TRAAETGAGV (357 aa). The HD domain occupies 448–570; sequence VDEHILMVVR…MRDERHLIAL (123 aa). ACT domains are found at residues 687–772 and 796–871; these read EVLV…GRLS and VLSI…PETP. Positions 864-887 are disordered; sequence TSPQPETPGKAPGKPSAGDRIIPR.

The protein belongs to the GlnD family. It depends on Mg(2+) as a cofactor.

The enzyme catalyses [protein-PII]-L-tyrosine + UTP = [protein-PII]-uridylyl-L-tyrosine + diphosphate. It catalyses the reaction [protein-PII]-uridylyl-L-tyrosine + H2O = [protein-PII]-L-tyrosine + UMP + H(+). Its activity is regulated as follows. Uridylyltransferase (UTase) activity is inhibited by glutamine, while glutamine activates uridylyl-removing (UR) activity. In terms of biological role, modifies, by uridylylation and deuridylylation, the PII regulatory proteins (GlnB and homologs), in response to the nitrogen status of the cell that GlnD senses through the glutamine level. Under low glutamine levels, catalyzes the conversion of the PII proteins and UTP to PII-UMP and PPi, while under higher glutamine levels, GlnD hydrolyzes PII-UMP to PII and UMP (deuridylylation). Thus, controls uridylylation state and activity of the PII proteins, and plays an important role in the regulation of nitrogen assimilation and metabolism. The chain is Bifunctional uridylyltransferase/uridylyl-removing enzyme from Nitrosospira multiformis (strain ATCC 25196 / NCIMB 11849 / C 71).